A 332-amino-acid polypeptide reads, in one-letter code: Glyoxylate reductase (332 aa).

NADP(+) is bound by residues 155–158 (MGRI) and 236–238 (TSR). Active-site residues include Arg238 and Glu267. His286 serves as the catalytic Proton donor. 286–288 (HAA) provides a ligand contact to NADP(+).

This sequence belongs to the D-isomer specific 2-hydroxyacid dehydrogenase family. GyaR subfamily. Homodimer.

It is found in the cytoplasm. It catalyses the reaction glycolate + NAD(+) = glyoxylate + NADH + H(+). This Korarchaeum cryptofilum (strain OPF8) protein is Glyoxylate reductase.